A 398-amino-acid polypeptide reads, in one-letter code: Phosphoglycerate kinase (398 aa).

Substrate is bound by residues 21 to 23 (DFN), Arg36, 59 to 62 (HLGR), Arg119, and Arg157. ATP contacts are provided by residues Lys208, Gly296, Glu327, and 354–357 (GGDS).

The protein belongs to the phosphoglycerate kinase family. Monomer.

Its subcellular location is the cytoplasm. It catalyses the reaction (2R)-3-phosphoglycerate + ATP = (2R)-3-phospho-glyceroyl phosphate + ADP. It functions in the pathway carbohydrate degradation; glycolysis; pyruvate from D-glyceraldehyde 3-phosphate: step 2/5. In Streptococcus pyogenes serotype M1, this protein is Phosphoglycerate kinase (pgk).